The chain runs to 353 residues: Photosystem II protein D1 (353 aa).

At T2 the chain carries N-acetylthreonine. Residue T2 is modified to Phosphothreonine. The next 3 helical transmembrane spans lie at 29-46, 118-133, and 142-156; these read YIGWFGVLMIPTLLTATS, HFLLGVACYMGREWEL, and WIAVAYSAPVAAATA. Residue H118 participates in chlorophyll a binding. Residue Y126 participates in pheophytin a binding. 2 residues coordinate [CaMn4O5] cluster: D170 and E189. A helical membrane pass occupies residues 197 to 218; that stretch reads FHMLGVAGVFGGSLFSAMHGSL. Chlorophyll a is bound at residue H198. A quinone contacts are provided by residues H215 and 264 to 265; that span reads SF. Residue H215 participates in Fe cation binding. Residue H272 coordinates Fe cation. Residues 274 to 288 traverse the membrane as a helical segment; that stretch reads FLAAWPVVGIWFTAL. [CaMn4O5] cluster-binding residues include H332, E333, D342, and A344. Positions 345–353 are excised as a propeptide; that stretch reads AVEAPSING.

This sequence belongs to the reaction center PufL/M/PsbA/D family. In terms of assembly, PSII is composed of 1 copy each of membrane proteins PsbA, PsbB, PsbC, PsbD, PsbE, PsbF, PsbH, PsbI, PsbJ, PsbK, PsbL, PsbM, PsbT, PsbX, PsbY, PsbZ, Psb30/Ycf12, at least 3 peripheral proteins of the oxygen-evolving complex and a large number of cofactors. It forms dimeric complexes. It depends on The D1/D2 heterodimer binds P680, chlorophylls that are the primary electron donor of PSII, and subsequent electron acceptors. It shares a non-heme iron and each subunit binds pheophytin, quinone, additional chlorophylls, carotenoids and lipids. D1 provides most of the ligands for the Mn4-Ca-O5 cluster of the oxygen-evolving complex (OEC). There is also a Cl(-1) ion associated with D1 and D2, which is required for oxygen evolution. The PSII complex binds additional chlorophylls, carotenoids and specific lipids. as a cofactor. Post-translationally, tyr-161 forms a radical intermediate that is referred to as redox-active TyrZ, YZ or Y-Z. In terms of processing, C-terminally processed by CTPA; processing is essential to allow assembly of the oxygen-evolving complex and thus photosynthetic growth.

It localises to the plastid. The protein resides in the chloroplast thylakoid membrane. The catalysed reaction is 2 a plastoquinone + 4 hnu + 2 H2O = 2 a plastoquinol + O2. Functionally, photosystem II (PSII) is a light-driven water:plastoquinone oxidoreductase that uses light energy to abstract electrons from H(2)O, generating O(2) and a proton gradient subsequently used for ATP formation. It consists of a core antenna complex that captures photons, and an electron transfer chain that converts photonic excitation into a charge separation. The D1/D2 (PsbA/PsbD) reaction center heterodimer binds P680, the primary electron donor of PSII as well as several subsequent electron acceptors. In Medicago sativa (Alfalfa), this protein is Photosystem II protein D1.